The sequence spans 353 residues: 26S proteasome non-ATPase regulatory subunit 8 (353 aa).

Residues 1 to 25 are disordered; sequence MFIKGRAAKTPRGEPRRSSRGGRKL. The region spanning 165 to 334 is the PCI domain; that stretch reads PSFERYMAQL…QQKPEDSTIP (170 aa). K300 is covalently cross-linked (Glycyl lysine isopeptide (Lys-Gly) (interchain with G-Cter in SUMO2)).

Belongs to the proteasome subunit S14 family. In terms of assembly, component of the 19S proteasome regulatory particle complex. The 26S proteasome consists of a 20S core particle (CP) and two 19S regulatory subunits (RP). The regulatory particle is made of a lid composed of 9 subunits including PSMD8, a base containing 6 ATPases and few additional components. Interacts with DDI2. Interacts with TASOR. As to expression, expressed in the Sertoli cells of the testis.

In terms of biological role, component of the 26S proteasome, a multiprotein complex involved in the ATP-dependent degradation of ubiquitinated proteins. This complex plays a key role in the maintenance of protein homeostasis by removing misfolded or damaged proteins, which could impair cellular functions, and by removing proteins whose functions are no longer required. Therefore, the proteasome participates in numerous cellular processes, including cell cycle progression, apoptosis, or DNA damage repair. This chain is 26S proteasome non-ATPase regulatory subunit 8 (Psmd8), found in Mus musculus (Mouse).